The sequence spans 412 residues: Cathepsin D (412 aa).

Positions 1 to 20 (MQPSSLLPLALCLLAAPASA) are cleaved as a signal peptide. A propeptide spans 21–64 (LVRIPLHKFTSIRRTMSEVGGSVEDLIAKGPVSKYSQAVPAVTE) (activation peptide). A glycan (O-linked (GalNAc...) threonine) is linked at Thr63. The Peptidase A1 domain occupies 79–407 (YYGEIGIGTP…DRDNNRVGFA (329 aa)). 2 cysteine pairs are disulfide-bonded: Cys91/Cys160 and Cys110/Cys117. The active site involves Asp97. N-linked (GlcNAc...) asparagine glycosylation is found at Asn134 and Asn263. Cysteines 286 and 290 form a disulfide. Asp295 is a catalytic residue. A disulfide bridge connects residues Cys329 and Cys366.

The protein belongs to the peptidase A1 family. As to quaternary structure, consists of a light chain and a heavy chain. Interacts with ADAM30; this leads to activation of CTSD. Interacts with GRN; stabilizes CTSD; increases its proteolytic activity. Post-translationally, N- and O-glycosylated. In terms of processing, undergoes proteolytic cleavage and activation by ADAM30. As well as the major heavy chain which starts at Leu-169, 2 minor forms starting at Gly-170 and Gly-171 have been identified. An additional form starting at Ala-168 has also been identified. In terms of tissue distribution, expressed in the aorta extracellular space (at protein level). Expressed in liver (at protein level).

It is found in the lysosome. Its subcellular location is the melanosome. The protein resides in the secreted. It localises to the extracellular space. It catalyses the reaction Specificity similar to, but narrower than, that of pepsin A. Does not cleave the 4-Gln-|-His-5 bond in B chain of insulin.. In terms of biological role, acid protease active in intracellular protein breakdown. Plays a role in APP processing following cleavage and activation by ADAM30 which leads to APP degradation. Involved in the pathogenesis of several diseases such as breast cancer and possibly Alzheimer disease. The polypeptide is Cathepsin D (CTSD) (Homo sapiens (Human)).